We begin with the raw amino-acid sequence, 191 residues long: Succinoglycan biosynthesis protein ExoI (191 aa).

The interval 1-21 (MTRIKSAVAAGGRRAPHSARL) is disordered.

It functions in the pathway glycan metabolism; exopolysaccharide biosynthesis. This is Succinoglycan biosynthesis protein ExoI (exoI) from Rhizobium meliloti (strain 1021) (Ensifer meliloti).